The primary structure comprises 172 residues: Large ribosomal subunit protein uL10 (172 aa).

It belongs to the universal ribosomal protein uL10 family. Part of the ribosomal stalk of the 50S ribosomal subunit. The N-terminus interacts with L11 and the large rRNA to form the base of the stalk. The C-terminus forms an elongated spine to which L12 dimers bind in a sequential fashion forming a multimeric L10(L12)X complex.

Functionally, forms part of the ribosomal stalk, playing a central role in the interaction of the ribosome with GTP-bound translation factors. The protein is Large ribosomal subunit protein uL10 of Francisella tularensis subsp. tularensis (strain FSC 198).